Reading from the N-terminus, the 818-residue chain is Sodium/hydrogen exchanger 1 (818 aa).

Topologically, residues M1–H98 are extracellular. Residues P39–H76 form a disordered region. N-linked (GlcNAc...) asparagine glycosylation is present at N75. A helical transmembrane segment spans residues V99–V121. Residues I122–P130 lie on the Cytoplasmic side of the membrane. Residues E131–A148 traverse the membrane as a helical segment. The Extracellular segment spans residues V149 to S158. Residues E159–F176 form a helical membrane-spanning segment. Over L177–L186 the chain is Cytoplasmic. The chain crosses the membrane as a helical span at residues G187–G215. Topologically, residues G216–I222 are extracellular. Residues G223–I249 traverse the membrane as a helical segment. Residues H250–N252 are Cytoplasmic-facing. Residues E253 to Y283 traverse the membrane as a helical segment. Over D284 to G287 the chain is Extracellular. Residues I288 to F322 traverse the membrane as a helical segment. Over T323–V328 the chain is Cytoplasmic. A helical membrane pass occupies residues I329–A341. Topologically, residues Y342 to L350 are extracellular. Residues S351–I371 form a helical membrane-spanning segment. At S372 to H373 the chain is on the cytoplasmic side. A helical transmembrane segment spans residues K374–A404. The Extracellular segment spans residues G405–N410. A helical membrane pass occupies residues W411–K438. The Cytoplasmic segment spans residues F439–L444. Residues T445–L469 form a helical membrane-spanning segment. Residues D470–P475 lie on the Extracellular side of the membrane. Residues M476 to L505 form a helical membrane-spanning segment. Residues V503–H545 form an interaction with TESC region. The Cytoplasmic portion of the chain corresponds to L506–Q818. The PI(4,5)P2-binding region stretch occupies residues K509–R516. An interaction with CHP2 region spans residues K515–H545. Residues H540–H545 are confers pH-dependent PI(4,5)P2 binding. Positions R552–K560 are PI(4,5)P2-binding region. A phosphoserine mark is found at S599 and S602. T603 is modified (phosphothreonine). 2 positions are modified to phosphoserine: S605 and S648. The interaction with TESC stretch occupies residues K633–Q818. Residues K633 to Q818 form an interaction with CALM1 region. The interaction with PPP3CA stretch occupies residues L684–P687. A phosphoserine mark is found at S693, S697, and S703. The interaction with PPP3CA stretch occupies residues P715–D720. 3 positions are modified to phosphoserine: S723, S726, and S729. Residues G739–Q818 are disordered. Residues T752 and T782 each carry the phosphothreonine modification. The segment covering P785–I794 has biased composition (polar residues). Phosphoserine occurs at positions 788, 790, and 799.

The protein belongs to the monovalent cation:proton antiporter 1 (CPA1) transporter (TC 2.A.36) family. As to quaternary structure, homodimer; dimerization is crucial for its function. Oligomer. Interacts with CALM in a calcium-dependent manner. Interacts with TESC. Interacts (via the juxtamembrane region of the cytoplasmic C-terminal domain) with CHP1; the interaction occurs at the plasma membrane in a calcium-dependent manner. Interacts with CHP2; the interaction occurs in a calcium-dependent manner. Interacts with EZR; regulates the cytoskeletal interactions of SLC9A1 and promotes stress fiber formation. Ubiquitinated, leading to its degradation by the proteasome. Ubiquitination is reduced by CHP1. In terms of processing, O-glycosylated. Post-translationally, palmitoylated; may play a major role in SLC9A1 regulation. Phosphorylation at Thr-782 increases SLC9A1 activity. Specifically dephosphorylated at Thr-782 by PPP3CA that negatively regulates SLC9A1 activity. Phosphorylation at Ser-648 by AKT1 reduces SLC9A1 binding to CALM1.

The protein localises to the cell membrane. The protein resides in the basolateral cell membrane. It carries out the reaction Na(+)(in) + H(+)(out) = Na(+)(out) + H(+)(in). The enzyme catalyses Li(+)(out) + H(+)(in) = Li(+)(in) + H(+)(out). It catalyses the reaction Li(+)(in) + Na(+)(out) = Li(+)(out) + Na(+)(in). Activated at acidic pHs. Inhibited by cariporide and eniporide. Inhibited by amiloride and 5-amino-substituted derivatives. Phosphatidylinositol 4,5-bisphosphate (PI(4,5)P2) and phosphatidylinositol 3,4,5-trisphosphate (PI(3,4,5)P3) bind and differentially regulate SLC9A1 activity. Its function is as follows. Electroneutral Na(+) /H(+) antiporter that extrudes Na(+) in exchange for external protons driven by the inward sodium ion chemical gradient, protecting cells from acidification that occurs from metabolism. Exchanges intracellular H(+) ions for extracellular Na(+) in 1:1 stoichiometry. Plays a key role in maintening intracellular pH neutral and cell volume, and thus is important for cell growth, proliferation, migration and survival. In addition, can transport lithium Li(+) and also functions as a Na(+)/Li(+) antiporter. SLC9A1 also functions in membrane anchoring and organization of scaffolding complexes that coordinate signaling inputs. This is Sodium/hydrogen exchanger 1 (SLC9A1) from Sus scrofa (Pig).